Consider the following 201-residue polypeptide: Twist-related protein 1 (201 aa).

Positions 1 to 18 (MMQDVSSSPVSPADDSLS) are enriched in low complexity. A disordered region spans residues 1 to 106 (MMQDVSSSPV…GGGSPQSYEE (106 aa)). The segment covering 34-43 (RGGRKRRSSR) has biased composition (basic residues). 2 stretches are compositionally biased toward gly residues: residues 46 to 65 (AGGG…GGDE) and 80 to 100 (GCGG…GGGS). In terms of domain architecture, bHLH spans 109 to 160 (TQRVMANVRERQRTQSLNEAFAALPKIIPTLPSDKLSKIQTLKLAARYIDFL). Residues 162–190 (QVLQSDELDSKMASYVAHERLSYAFSVWR) form a sufficient for transactivation activity region.

Efficient DNA binding requires dimerization with another bHLH protein. Homodimer or heterodimer with E proteins such as TCF3. ID1 binds preferentially to TCF3 but does not interact efficiently with TWIST1 so ID1 levels control the amount of TCF3 available to dimerize with TWIST and thus determine the type of dimer formed.

It is found in the nucleus. Its function is as follows. Acts as a transcriptional regulator. Inhibits myogenesis by sequestrating E proteins, inhibiting trans-activation by MEF2, and inhibiting DNA-binding by MYOD1 through physical interaction. This interaction probably involves the basic domains of both proteins. Also represses expression of pro-inflammatory cytokines such as TNFA and IL1B. Regulates cranial suture patterning and fusion. Activates transcription as a heterodimer with E proteins. Regulates gene expression differentially, depending on dimer composition. Homodimers induce expression of FGFR2 and POSTN while heterodimers repress FGFR2 and POSTN expression and induce THBS1 expression. Heterodimerization is also required for osteoblast differentiation. Represses the activity of the circadian transcriptional activator: NPAS2-BMAL1 heterodimer. The protein is Twist-related protein 1 (TWIST1) of Pan troglodytes (Chimpanzee).